The sequence spans 842 residues: MVNFTVDQMRSLMDKVTNVRNMSVIAHVDHGKSTLTDSLVQRAGIISAAKAGEARFTDTRKDEQERGITIKSTAISLYSEMGDDDVKEIKQKTEGNSFLINLIDSPGHVDFSSEVTAALRVTDGALVVVDCVEGVCVQTETVLRQALGERIKPVVVINKVDRALLELQVTKEDLYQSFARTVESVNVVIATYTDKTIGDNQVYPEQGTVAFGSGLHGWAFTVRQFATRYSKKFGVDRIKMMERLWGDSYFNPKTKKWTNKDKDAAGKPLERAFNMFVLDPIFRLFAAIMNFKKDEIPVLLEKLEINLKREEKELEGKALLKVVMRKFLPAADALLEMIVLHLPSPVTAQAYRAETLYEGPSDDQFCIGIRECDPKAELMVYISKMVPTSDKGRFYAFGRVFSGTVKSGQKVRIQGPNYVPGKKEDLFIKAVQRTVLMMGRTVEPIDDVPAGNILGIVGIDQFLLKSGTLTTNEAAHNMKVMKFSVSPVVQVAVEVKNANDLPKLVEGLKRLSKSDPCVLTYISESGEHIVAGTGELHLEICLQDLQDDHAGVPLKISPPVVTYRETVTNESSMTALSKSQNKHNRIYLKAQPIDEELSLAIEEGKVHPRDDFKARARIMADEYGWDVTDARKIWCFGPDGTGANLVVDQSKAVQYLHEIKDSVVAGFQLATKEGPILGENMRSVRVNILDVTLHADAIHRGGGQVIPTMKRVTYAAFLLAEPAIQEPIFLVEIQCPENAIGGIYSVLNKKRGQVISEEQRPGTPLFTVKAYLPVNESFGFTGELRQATAGQAFPQMVFDHWANMNGNPLDPASKVGEIVLAARKRQGMKENVPGYEEYYDKL.

The 237-residue stretch at 17–253 (TNVRNMSVIA…LWGDSYFNPK (237 aa)) folds into the tr-type G domain. GTP-binding positions include 26 to 33 (AHVDHGKS), 158 to 161 (NKVD), and 213 to 215 (SGL). A Diphthamide modification is found at His699.

The protein belongs to the TRAFAC class translation factor GTPase superfamily. Classic translation factor GTPase family. EF-G/EF-2 subfamily.

The protein resides in the cytoplasm. The enzyme catalyses GTP + H2O = GDP + phosphate + H(+). Catalyzes the GTP-dependent ribosomal translocation step during translation elongation. During this step, the ribosome changes from the pre-translocational (PRE) to the post-translocational (POST) state as the newly formed A-site-bound peptidyl-tRNA and P-site-bound deacylated tRNA move to the P and E sites, respectively. Catalyzes the coordinated movement of the two tRNA molecules, the mRNA and conformational changes in the ribosome. The polypeptide is Elongation factor 2 (EFT1) (Komagataella pastoris (Yeast)).